Consider the following 206-residue polypeptide: dITP/XTP pyrophosphatase (206 aa).

Substrate is bound at residue 10–15 (SGNAGK). 2 residues coordinate Mg(2+): glutamate 40 and aspartate 69. Aspartate 69 acts as the Proton acceptor in catalysis. Substrate-binding positions include serine 70, 148–151 (FGYD), lysine 171, and 176–177 (HR).

Belongs to the HAM1 NTPase family. As to quaternary structure, homodimer. Requires Mg(2+) as cofactor.

It carries out the reaction XTP + H2O = XMP + diphosphate + H(+). The catalysed reaction is dITP + H2O = dIMP + diphosphate + H(+). It catalyses the reaction ITP + H2O = IMP + diphosphate + H(+). Pyrophosphatase that catalyzes the hydrolysis of nucleoside triphosphates to their monophosphate derivatives, with a high preference for the non-canonical purine nucleotides XTP (xanthosine triphosphate), dITP (deoxyinosine triphosphate) and ITP. Seems to function as a house-cleaning enzyme that removes non-canonical purine nucleotides from the nucleotide pool, thus preventing their incorporation into DNA/RNA and avoiding chromosomal lesions. The sequence is that of dITP/XTP pyrophosphatase from Synechococcus sp. (strain CC9311).